The following is a 348-amino-acid chain: Anthranilate phosphoribosyltransferase (348 aa).

Residues Gly91, 94 to 95 (GD), Thr99, 101 to 104 (NIST), 119 to 127 (KHGNRSASG), and Ser131 each bind 5-phospho-alpha-D-ribose 1-diphosphate. Gly91 is a binding site for anthranilate. Position 103 (Ser103) interacts with Mg(2+). Asn122 serves as a coordination point for anthranilate. Residue Arg177 participates in anthranilate binding. Asp236 and Glu237 together coordinate Mg(2+).

The protein belongs to the anthranilate phosphoribosyltransferase family. Homodimer. The cofactor is Mg(2+).

It carries out the reaction N-(5-phospho-beta-D-ribosyl)anthranilate + diphosphate = 5-phospho-alpha-D-ribose 1-diphosphate + anthranilate. The protein operates within amino-acid biosynthesis; L-tryptophan biosynthesis; L-tryptophan from chorismate: step 2/5. Catalyzes the transfer of the phosphoribosyl group of 5-phosphorylribose-1-pyrophosphate (PRPP) to anthranilate to yield N-(5'-phosphoribosyl)-anthranilate (PRA). The chain is Anthranilate phosphoribosyltransferase from Synechococcus elongatus (strain ATCC 33912 / PCC 7942 / FACHB-805) (Anacystis nidulans R2).